The sequence spans 692 residues: MRVLGLFERGNNLNFADTYIYTWNKQYSYHENAFLISNQVATTIIIYLSDTIVNEVDKAFTLLNSNGIPALVIRKDHIGIFTSSNFTYDWQHKIVYFHEYTYYKNNEFIVSDEFWLHTNIHELLPYKLLYYERGMRKLYDGEEYTLYNTATDDDILYKYIYEKDAIMSGDDYSELYDDKNFRNFVHFMRLLRMRFAVPFDQLSNRVTRSRAFFKSKIHIGLRNESIPQALDNINSQWINYSANGIMISELKGSGSYSEKRISEFDIGQFKNYMNFLTLMFYIKNMKKRPSCTIIGAAPGYWIPSMKRYFTIITYDDKIVDSTEHHNRYFSEEDITKVRTNGVYIDVRSDFDKSDWKKRRQLVEEETKRWLEISYRLLEGKYVEAVLLKMTAMDIEIPDGYFVHFPTTYRKSEYYLLIDKQIIKKQKVKVTKSLMYNAINTIYSDNVFISGKYTLRGKTEGVVALYCLSNTINQKDKVIQYANSFSGTCMTVRLNNTYEVNKVINLNNADYTFLPSDFVCPVNTVLTSYRGYAGVFGYAITKDLKSDGNNHIYIIPNARDENNFDTFASHLGLSRYSHSKRFSESATTMSGYLFRDMVSGKEDMGDTDKANYASGHVFNAIAHYRFDYTYDIVGWLRLHKNKQFRVKSDIYEEHTSDEVRNAIEAAYTYYLLDGDRVGKEYAKKIMEIWEAQV.

Positions 187 to 255 (FMRLLRMRFA…MISELKGSGS (69 aa)) are N7-methyltransferase activity. Residues 256 to 432 (YSEKRISEFD…KKQKVKVTKS (177 aa)) form a 2'-O-methyltransferase activity region. An N7-methyltransferase activity region spans residues 433–558 (LMYNAINTIY…NHIYIIPNAR (126 aa)). The interval 559–692 (DENNFDTFAS…KIMEIWEAQV (134 aa)) is GTase/RTPase activity.

It belongs to the rotavirus VP3 family. In terms of assembly, interacts with VP1. Interacts with VP2.

The protein localises to the virion. The enzyme catalyses a 5'-end diphospho-ribonucleoside in mRNA + GTP + H(+) = a 5'-end (5'-triphosphoguanosine)-ribonucleoside in mRNA + diphosphate. It catalyses the reaction a 5'-end (5'-triphosphoguanosine)-ribonucleoside in mRNA + S-adenosyl-L-methionine = a 5'-end (N(7)-methyl 5'-triphosphoguanosine)-ribonucleoside in mRNA + S-adenosyl-L-homocysteine. In terms of biological role, multifunctional enzyme involved in mRNA capping. Catalyzes the formation of the 5' cap structure on the viral plus-strand transcripts. Specifically binds to GTP and displays guanylyltransferase and methyltransferase activities. Has affinity for ssRNA but not for dsRNA. Capping activity is non-specific and caps RNAs that initiate with either a G or an A residue. Together with VP1 polymerase, forms a VP1-VP3 complex positioned near the channels situated at each of the five-fold vertices of the core. Following infection, the outermost layer of the virus is lost, leaving a double-layered particle (DLP) made up of the core and VP6 shell. VP1 then catalyzes the transcription of fully conservative plus-strand genomic RNAs that are capped by VP3 and extruded through the DLP's channels into the cytoplasm where they function as mRNAs for translation of viral proteins. DLPs probably have an RNA triphosphatase activity as well, whereas open cores do not. The chain is Protein VP3 from Rotavirus C (strain RVC/Pig/United States/Cowden/1980) (RV-C).